Here is a 156-residue protein sequence, read N- to C-terminus: Small ribosomal subunit protein uS7 (156 aa).

It belongs to the universal ribosomal protein uS7 family. Part of the 30S ribosomal subunit. Contacts proteins S9 and S11.

Functionally, one of the primary rRNA binding proteins, it binds directly to 16S rRNA where it nucleates assembly of the head domain of the 30S subunit. Is located at the subunit interface close to the decoding center, probably blocks exit of the E-site tRNA. The sequence is that of Small ribosomal subunit protein uS7 from Mycolicibacterium vanbaalenii (strain DSM 7251 / JCM 13017 / BCRC 16820 / KCTC 9966 / NRRL B-24157 / PYR-1) (Mycobacterium vanbaalenii).